We begin with the raw amino-acid sequence, 144 residues long: Large ribosomal subunit protein uL15 (144 aa).

Residues 1 to 59 form a disordered region; that stretch reads MRLNTISPAEGSKPTGKRSGRGIGSGLGKTGGVGHKGQKSRSGGRVKPGFEGGQMPIQR. The segment covering 21–35 has biased composition (gly residues); sequence RGIGSGLGKTGGVGH.

The protein belongs to the universal ribosomal protein uL15 family. In terms of assembly, part of the 50S ribosomal subunit.

Functionally, binds to the 23S rRNA. The polypeptide is Large ribosomal subunit protein uL15 (Alteromonas mediterranea (strain DSM 17117 / CIP 110805 / LMG 28347 / Deep ecotype)).